The primary structure comprises 512 residues: Glutathione-binding protein GsiB (512 aa).

The N-terminal stretch at 1 to 26 (MARAVHRSGLVALGIATALMASCAFA) is a signal peptide.

It belongs to the bacterial solute-binding protein 5 family. In terms of assembly, the complex is composed of two ATP-binding proteins (GsiA), two transmembrane proteins (GsiC and GsiD) and a solute-binding protein (GsiB).

The protein resides in the periplasm. In terms of biological role, part of the ABC transporter complex GsiABCD involved in glutathione import. Binds glutathione. This Escherichia coli O6:K15:H31 (strain 536 / UPEC) protein is Glutathione-binding protein GsiB.